A 147-amino-acid polypeptide reads, in one-letter code: UPF0047 protein sll1880 (147 aa).

Belongs to the UPF0047 family.

In Synechocystis sp. (strain ATCC 27184 / PCC 6803 / Kazusa), this protein is UPF0047 protein sll1880.